The following is a 679-amino-acid chain: Stress-70 protein, mitochondrial (679 aa).

Residues 1 to 46 constitute a mitochondrion transit peptide; it reads MISASRAAAARLVGTAASRSPAAARPQDGWNGLSHEAFRFVSRRDY. The interaction with NFS1 stretch occupies residues 1 to 432; it reads MISASRAAAA…IQGGVLAGDV (432 aa). Positions 63 and 64 each coordinate ADP. The tract at residues 63-431 is nucleotide-binding domain (NBD); the sequence is TNSCVAVMEG…AIQGGVLAGD (369 aa). K76 carries the post-translational modification N6-acetyllysine. Position 87 is a phosphothreonine (T87). Residues K135 and K138 each carry the N6-acetyllysine; alternate modification. Residues K135 and K138 each carry the N6-succinyllysine; alternate modification. An N6-acetyllysine modification is found at K143. K206 bears the N6-acetyllysine; alternate mark. K206 bears the N6-succinyllysine; alternate mark. Position 206 is an N6-malonyllysine; alternate (K206). K234 and K288 each carry N6-acetyllysine. The residue at position 300 (K300) is an N6-acetyllysine; alternate. K300 is subject to N6-succinyllysine; alternate. Residues E313, K316, and S320 each contribute to the ADP site. The residue at position 360 (K360) is an N6-acetyllysine; alternate. N6-succinyllysine; alternate is present on K360. At K368 the chain carries N6-succinyllysine. Residues G388 and R391 each coordinate ADP. At K394 the chain carries N6-succinyllysine. S408 carries the phosphoserine modification. The tract at residues 432–441 is interdomain linker; sequence VTDVLLLDVT. The interval 432 to 679 is interaction with FXN and ISCU; that stretch reads VTDVLLLDVT…QKEDQKEEKQ (248 aa). A substrate-binding domain (SBD) region spans residues 442-679; sequence PLSLGIETLG…QKEDQKEEKQ (238 aa). R513 bears the Omega-N-methylarginine mark. Residues K567 and K600 each carry the N6-acetyllysine; alternate modification. N6-succinyllysine; alternate occurs at positions 567 and 600. Residue K610 is modified to N6-succinyllysine. K612 carries the post-translational modification N6-acetyllysine. Position 646 is an N6-acetyllysine; alternate (K646). Residue K646 is modified to N6-succinyllysine; alternate. A disordered region spans residues 656–679; that stretch reads ASEREGSGSSGTGEQKEDQKEEKQ. A compositionally biased stretch (basic and acidic residues) spans 669–679; sequence EQKEDQKEEKQ.

The protein belongs to the heat shock protein 70 family. Interacts strongly with the intermediate form of FXN and weakly with its mature form. Interacts with HSCB. Associates with the mitochondrial contact site and cristae organizing system (MICOS) complex, composed of at least MICOS10/MIC10, CHCHD3/MIC19, CHCHD6/MIC25, APOOL/MIC27, IMMT/MIC60, APOO/MIC23/MIC26 and QIL1/MIC13. This complex was also known under the names MINOS or MitOS complex. The MICOS complex associates with mitochondrial outer membrane proteins SAMM50, MTX1, MTX2 and DNAJC11, mitochondrial inner membrane protein TMEM11 and with HSPA9. Interacts with DNLZ, the interaction is required to prevent self-aggregation. Interacts with TESPA1. Interacts with PDPN. Interacts with NFU1, NFS1 and ISCU. Interacts with TP53; the interaction promotes TP53 degradation. Interacts (via SBD domain) with UBXN2A; the interaction with UBXN2A inhibits HSPA9/MOT-2 interaction with and degradation of TP53, thereby promotes TP53 translocation to the nucleus. Interacts with ITPR1 AND VDAC1; this interaction couples ITPR1 to VDAC1. Component of the TIM23 mitochondrial inner membrane pre-sequence translocase complex.

Its subcellular location is the mitochondrion. It is found in the nucleus. The protein resides in the nucleolus. It localises to the cytoplasm. The protein localises to the mitochondrion matrix. The enzyme catalyses ATP + H2O = ADP + phosphate + H(+). With respect to regulation, the chaperone activity is regulated by ATP-induced allosteric coupling of the nucleotide-binding (NBD) and substrate-binding (SBD) domains. ATP binding in the NBD leads to a conformational change in the NBD, which is transferred through the interdomain linker (IDL) to the substrate-binding domain (SBD). This elicits a reduced substrate affinity and a faster substrate exchange rate. Upon hydrolysis of ATP to ADP, the protein undergoes a conformational change that increases its affinity for substrate proteins. It cycles through repeated phases of ATP hydrolysis and nucleotide exchange, facilitating repeated cycles of substrate binding and release. Functions in collaboration with co-chaperones. Functions with the co-chaperone, DNLZ, to maintain solubility and regulate ATP hydrolysis. Nucleotide exchange factors, GRPEL1 and GRPEL2, accelerate nucleotide exchange. Functionally, mitochondrial chaperone that plays a key role in mitochondrial protein import, folding, and assembly. Plays an essential role in the protein quality control system, the correct folding of proteins, the re-folding of misfolded proteins, and the targeting of proteins for subsequent degradation. These processes are achieved through cycles of ATP binding, ATP hydrolysis, and ADP release, mediated by co-chaperones. In mitochondria, it associates with the TIM (translocase of the inner membrane) protein complex to assist in the import and folding of mitochondrial proteins. Plays an important role in mitochondrial iron-sulfur cluster (ISC) biogenesis. Interacts with and stabilizes ISC cluster assembly proteins FXN, NFU1, NFS1 and ISCU. Regulates erythropoiesis via stabilization of ISC assembly. Regulates mitochondrial calcium-dependent apoptosis by coupling two calcium channels, ITPR1 and VDAC1, at the mitochondria-associated endoplasmic reticulum (ER) membrane to facilitate calcium transport from the ER lumen to the mitochondria intermembrane space, providing calcium for the downstream calcium channel MCU, which releases it into the mitochondrial matrix. Although primarily located in the mitochondria, it is also found in other cellular compartments. In the cytosol, it associates with proteins involved in signaling, apoptosis, or senescence. It may play a role in cell cycle regulation via its interaction with and promotion of degradation of TP53. May play a role in the control of cell proliferation and cellular aging. Protects against reactive oxygen species (ROS). Extracellular HSPA9 plays a cytoprotective role by preventing cell lysis following immune attack by the membrane attack complex by disrupting formation of the complex. This chain is Stress-70 protein, mitochondrial, found in Mus musculus (Mouse).